The chain runs to 237 residues: 1-(5-phosphoribosyl)-5-[(5-phosphoribosylamino)methylideneamino] imidazole-4-carboxamide isomerase (237 aa).

Catalysis depends on Asp8, which acts as the Proton acceptor. The active-site Proton donor is Asp129.

It belongs to the HisA/HisF family.

It is found in the cytoplasm. It carries out the reaction 1-(5-phospho-beta-D-ribosyl)-5-[(5-phospho-beta-D-ribosylamino)methylideneamino]imidazole-4-carboxamide = 5-[(5-phospho-1-deoxy-D-ribulos-1-ylimino)methylamino]-1-(5-phospho-beta-D-ribosyl)imidazole-4-carboxamide. Its pathway is amino-acid biosynthesis; L-histidine biosynthesis; L-histidine from 5-phospho-alpha-D-ribose 1-diphosphate: step 4/9. The chain is 1-(5-phosphoribosyl)-5-[(5-phosphoribosylamino)methylideneamino] imidazole-4-carboxamide isomerase from Roseiflexus castenholzii (strain DSM 13941 / HLO8).